We begin with the raw amino-acid sequence, 323 residues long: Phosphoribosylformylglycinamidine cyclo-ligase (323 aa).

It belongs to the AIR synthase family.

Its subcellular location is the cytoplasm. The enzyme catalyses 2-formamido-N(1)-(5-O-phospho-beta-D-ribosyl)acetamidine + ATP = 5-amino-1-(5-phospho-beta-D-ribosyl)imidazole + ADP + phosphate + H(+). The protein operates within purine metabolism; IMP biosynthesis via de novo pathway; 5-amino-1-(5-phospho-D-ribosyl)imidazole from N(2)-formyl-N(1)-(5-phospho-D-ribosyl)glycinamide: step 2/2. This is Phosphoribosylformylglycinamidine cyclo-ligase from Saccharolobus solfataricus (strain ATCC 35092 / DSM 1617 / JCM 11322 / P2) (Sulfolobus solfataricus).